We begin with the raw amino-acid sequence, 131 residues long: Small ribosomal subunit protein uS12 (131 aa).

Aspartate 89 carries the 3-methylthioaspartic acid modification.

The protein belongs to the universal ribosomal protein uS12 family. In terms of assembly, part of the 30S ribosomal subunit. Contacts proteins S8 and S17. May interact with IF1 in the 30S initiation complex.

With S4 and S5 plays an important role in translational accuracy. Functionally, interacts with and stabilizes bases of the 16S rRNA that are involved in tRNA selection in the A site and with the mRNA backbone. Located at the interface of the 30S and 50S subunits, it traverses the body of the 30S subunit contacting proteins on the other side and probably holding the rRNA structure together. The combined cluster of proteins S8, S12 and S17 appears to hold together the shoulder and platform of the 30S subunit. The sequence is that of Small ribosomal subunit protein uS12 from Karelsulcia muelleri (strain GWSS) (Sulcia muelleri).